We begin with the raw amino-acid sequence, 83 residues long: Cytochrome b559 subunit alpha (83 aa).

A helical membrane pass occupies residues valine 21–tryptophan 35. Residue histidine 23 participates in heme binding.

It belongs to the PsbE/PsbF family. In terms of assembly, heterodimer of an alpha subunit and a beta subunit. PSII is composed of 1 copy each of membrane proteins PsbA, PsbB, PsbC, PsbD, PsbE, PsbF, PsbH, PsbI, PsbJ, PsbK, PsbL, PsbM, PsbT, PsbX, PsbY, PsbZ, Psb30/Ycf12, at least 3 peripheral proteins of the oxygen-evolving complex and a large number of cofactors. It forms dimeric complexes. It depends on heme b as a cofactor.

The protein resides in the plastid. Its subcellular location is the chloroplast thylakoid membrane. In terms of biological role, this b-type cytochrome is tightly associated with the reaction center of photosystem II (PSII). PSII is a light-driven water:plastoquinone oxidoreductase that uses light energy to abstract electrons from H(2)O, generating O(2) and a proton gradient subsequently used for ATP formation. It consists of a core antenna complex that captures photons, and an electron transfer chain that converts photonic excitation into a charge separation. This is Cytochrome b559 subunit alpha from Oenothera berteroana (Bertero's evening primrose).